Reading from the N-terminus, the 314-residue chain is Epithelial-stromal interaction protein 1 (314 aa).

Disordered stretches follow at residues 1-72 (MYTR…PNES), 227-272 (WAGS…RAQI), and 289-314 (QGKS…SWGL). Residues 18 to 30 (SRDHAGAGQRREL) are compositionally biased toward basic and acidic residues. Ser39 is modified (phosphoserine). Positions 71–180 (ESRRQKIQRI…QEDIRRATFR (110 aa)) form a coiled coil. The span at 232–272 (AHRDSPQKEDNPRLQKTRDGHQKNKLLETKGQHQEEERAQI) shows a compositional bias: basic and acidic residues. A compositionally biased stretch (polar residues) spans 305-314 (NMNSTDSWGL).

In terms of tissue distribution, expressed in the spleen, with expression in T cells, B cells, natural killer cells and natural killer T cells and high expression in monocytes and macrophages.

Plays a role in M1 macrophage polarization and is required for the proper regulation of gene expression during M1 versus M2 macrophage differentiation. Might play a role in RELA/p65 and STAT1 phosphorylation and nuclear localization upon activation of macrophages. The protein is Epithelial-stromal interaction protein 1 (Epsti1) of Mus musculus (Mouse).